A 220-amino-acid polypeptide reads, in one-letter code: Deoxyribose-phosphate aldolase (220 aa).

The active-site Proton donor/acceptor is the aspartate 89. Lysine 151 (schiff-base intermediate with acetaldehyde) is an active-site residue. Lysine 180 acts as the Proton donor/acceptor in catalysis.

It belongs to the DeoC/FbaB aldolase family. DeoC type 1 subfamily.

The protein localises to the cytoplasm. The catalysed reaction is 2-deoxy-D-ribose 5-phosphate = D-glyceraldehyde 3-phosphate + acetaldehyde. It functions in the pathway carbohydrate degradation; 2-deoxy-D-ribose 1-phosphate degradation; D-glyceraldehyde 3-phosphate and acetaldehyde from 2-deoxy-alpha-D-ribose 1-phosphate: step 2/2. Functionally, catalyzes a reversible aldol reaction between acetaldehyde and D-glyceraldehyde 3-phosphate to generate 2-deoxy-D-ribose 5-phosphate. This chain is Deoxyribose-phosphate aldolase, found in Macrococcus caseolyticus (strain JCSC5402) (Macrococcoides caseolyticum).